We begin with the raw amino-acid sequence, 323 residues long: Putative CDC123-like protein L884 (323 aa).

It belongs to the CDC123 family.

This is Putative CDC123-like protein L884 from Acanthamoeba polyphaga mimivirus (APMV).